We begin with the raw amino-acid sequence, 156 residues long: D-aminoacyl-tRNA deacylase (156 aa).

The short motif at Gly142–Pro143 is the Gly-cisPro motif, important for rejection of L-amino acids element.

Belongs to the DTD family. As to quaternary structure, homodimer.

The protein resides in the cytoplasm. It carries out the reaction glycyl-tRNA(Ala) + H2O = tRNA(Ala) + glycine + H(+). The enzyme catalyses a D-aminoacyl-tRNA + H2O = a tRNA + a D-alpha-amino acid + H(+). Its function is as follows. An aminoacyl-tRNA editing enzyme that deacylates mischarged D-aminoacyl-tRNAs. Also deacylates mischarged glycyl-tRNA(Ala), protecting cells against glycine mischarging by AlaRS. Acts via tRNA-based rather than protein-based catalysis; rejects L-amino acids rather than detecting D-amino acids in the active site. By recycling D-aminoacyl-tRNA to D-amino acids and free tRNA molecules, this enzyme counteracts the toxicity associated with the formation of D-aminoacyl-tRNA entities in vivo and helps enforce protein L-homochirality. This is D-aminoacyl-tRNA deacylase from Delftia acidovorans (strain DSM 14801 / SPH-1).